Here is an 87-residue protein sequence, read N- to C-terminus: MSERNNRKVLVGRVVSDKMDKTITVLVETYKKHPLYGKRVKYSKKYKAHDENNVAKVGDIVKIMETRPLSATKRFRLVEVVEKAVIV.

This sequence belongs to the universal ribosomal protein uS17 family. Part of the 30S ribosomal subunit.

Functionally, one of the primary rRNA binding proteins, it binds specifically to the 5'-end of 16S ribosomal RNA. The protein is Small ribosomal subunit protein uS17 of Anoxybacillus flavithermus (strain DSM 21510 / WK1).